The chain runs to 260 residues: Snake venom serine protease serpentokallikrein-1 (260 aa).

Positions 1-18 (MVLIRVLANLLILQLSYA) are cleaved as a signal peptide. The propeptide occupies 19-24 (QRTSEL). Residues 25–251 (VIGGDECNIN…HLDWIKSIIA (227 aa)) form the Peptidase S1 domain. Disulfide bonds link C31–C165, C52–C68, C102–C258, C144–C212, C176–C191, and C202–C227. The active-site Charge relay system is H67. 2 N-linked (GlcNAc...) asparagine glycosylation sites follow: N81 and N105. The Charge relay system role is filled by D112. Residues N156 and N172 are each glycosylated (N-linked (GlcNAc...) asparagine). The active-site Charge relay system is the S206.

It belongs to the peptidase S1 family. Snake venom subfamily. In terms of assembly, monomer. Expressed by the venom gland.

It localises to the secreted. Functionally, snake venom serine protease that may act in the hemostasis system of the prey. The polypeptide is Snake venom serine protease serpentokallikrein-1 (Protobothrops mucrosquamatus (Taiwan habu)).